The sequence spans 872 residues: Tetratricopeptide repeat protein 16 (872 aa).

The interval 1–20 is disordered; sequence MTDSDEDALKVDQGPSQDIP. TPR repeat units follow at residues 61–94, 96–128, 136–169, 251–284, 285–318, 331–364, 365–398, and 406–439; these read VREY…DPQL, DFYA…QQDN, TFVL…QPEK, AQQA…NPLD, PSFF…VTED, LLTY…EQQE, KGLY…SPQD, and GLLQ…NPQK. Disordered regions lie at residues 557–640 and 653–872; these read ATPE…ETET and TAMT…YEVL. Over residues 577 to 590 the composition is skewed to acidic residues; it reads KEEEEKEEEEQKEE. Residues 591–604 show a composition bias toward basic and acidic residues; that stretch reads EEQKKEEKKEEKKP. 4 stretches are compositionally biased toward polar residues: residues 610–640, 653–675, 689–709, and 721–754; these read KVAS…ETET, TAMT…NNRE, GQRQ…NFSK, and KTKA…SQGP. Residues 762-783 are compositionally biased toward basic residues; sequence KTTRSPRQRPRKVKAARGRSWR. Polar residues-rich tracts occupy residues 799 to 827 and 839 to 861; these read RSST…GQRT and GMSS…SKTE.

The chain is Tetratricopeptide repeat protein 16 (TTC16) from Macaca fascicularis (Crab-eating macaque).